The sequence spans 986 residues: Bifunctional glutamine synthetase adenylyltransferase/adenylyl-removing enzyme (986 aa).

Residues Met1 to Lys475 form an adenylyl removase region. Positions Thr481 to Glu986 are adenylyl transferase.

The protein belongs to the GlnE family. The cofactor is Mg(2+).

The enzyme catalyses [glutamine synthetase]-O(4)-(5'-adenylyl)-L-tyrosine + phosphate = [glutamine synthetase]-L-tyrosine + ADP. The catalysed reaction is [glutamine synthetase]-L-tyrosine + ATP = [glutamine synthetase]-O(4)-(5'-adenylyl)-L-tyrosine + diphosphate. Its function is as follows. Involved in the regulation of glutamine synthetase GlnA, a key enzyme in the process to assimilate ammonia. When cellular nitrogen levels are high, the C-terminal adenylyl transferase (AT) inactivates GlnA by covalent transfer of an adenylyl group from ATP to specific tyrosine residue of GlnA, thus reducing its activity. Conversely, when nitrogen levels are low, the N-terminal adenylyl removase (AR) activates GlnA by removing the adenylyl group by phosphorolysis, increasing its activity. The regulatory region of GlnE binds the signal transduction protein PII (GlnB) which indicates the nitrogen status of the cell. The sequence is that of Bifunctional glutamine synthetase adenylyltransferase/adenylyl-removing enzyme from Pasteurella multocida (strain Pm70).